Here is a 650-residue protein sequence, read N- to C-terminus: 1-deoxy-D-xylulose-5-phosphate synthase (650 aa).

Residues His-73 and 114-116 (SHA) each bind thiamine diphosphate. Asp-145 provides a ligand contact to Mg(2+). Thiamine diphosphate contacts are provided by residues 146-147 (GA), Asn-174, Tyr-285, and Glu-367. Asn-174 is a binding site for Mg(2+). The interval 631–650 (MGDEVGADESNQTPAGGGQA) is disordered.

It belongs to the transketolase family. DXPS subfamily. Homodimer. Requires Mg(2+) as cofactor. It depends on thiamine diphosphate as a cofactor.

The catalysed reaction is D-glyceraldehyde 3-phosphate + pyruvate + H(+) = 1-deoxy-D-xylulose 5-phosphate + CO2. Its pathway is metabolic intermediate biosynthesis; 1-deoxy-D-xylulose 5-phosphate biosynthesis; 1-deoxy-D-xylulose 5-phosphate from D-glyceraldehyde 3-phosphate and pyruvate: step 1/1. Its function is as follows. Catalyzes the acyloin condensation reaction between C atoms 2 and 3 of pyruvate and glyceraldehyde 3-phosphate to yield 1-deoxy-D-xylulose-5-phosphate (DXP). The protein is 1-deoxy-D-xylulose-5-phosphate synthase of Parafrankia sp. (strain EAN1pec).